The following is a 433-amino-acid chain: Legumain (433 aa).

A signal peptide spans 1-17 (MVWKVAVFLSVALGIGA). Asparagine 91 carries N-linked (GlcNAc...) asparagine glycosylation. Residue histidine 148 is part of the active site. Asparagine 167 carries N-linked (GlcNAc...) asparagine glycosylation. Cysteine 189 functions as the Nucleophile in the catalytic mechanism. 2 N-linked (GlcNAc...) asparagine glycosylation sites follow: asparagine 263 and asparagine 272. Positions 324 to 433 (DLEESRQLTE…SMDHVCLGHY (110 aa)) are excised as a propeptide. 2 disulfide bridges follow: cysteine 378–cysteine 412 and cysteine 390–cysteine 429.

The protein belongs to the peptidase C13 family. In terms of assembly, homodimer before autocatalytic removal of the propeptide. Monomer after autocatalytic processing. May interact with integrins. Post-translationally, activated by autocatalytic processing at pH 4. In terms of tissue distribution, ubiquitous. Particularly abundant in kidney, heart and placenta.

The protein resides in the lysosome. It catalyses the reaction Hydrolysis of proteins and small molecule substrates at -Asn-|-Xaa- bonds.. Inhibited by CST6. Functionally, has a strict specificity for hydrolysis of asparaginyl bonds. Can also cleave aspartyl bonds slowly, especially under acidic conditions. Involved in the processing of proteins for MHC class II antigen presentation in the lysosomal/endosomal system. Also involved in MHC class I antigen presentation in cross-presenting dendritic cells by mediating cleavage and maturation of Perforin-2 (MPEG1), thereby promoting antigen translocation in the cytosol. Required for normal lysosomal protein degradation in renal proximal tubules. Required for normal degradation of internalized EGFR. Plays a role in the regulation of cell proliferation via its role in EGFR degradation. The chain is Legumain from Homo sapiens (Human).